We begin with the raw amino-acid sequence, 1100 residues long: Serine/threonine/tyrosine-interacting-like protein 2 (1100 aa).

Positions 1–12 (MASSVEDQQLQQ) are enriched in polar residues. Residues 1 to 21 (MASSVEDQQLQQEEAESVKDV) form a disordered region. In terms of domain architecture, Tyrosine-protein phosphatase spans 141–289 (SPVDEVWPNV…LRQLNETLME (149 aa)). Residues 356 to 374 (CGSQQPNMQQPADQPSLPG) are compositionally biased toward polar residues. Disordered regions lie at residues 356 to 383 (CGSQ…EDGD), 411 to 436 (EDED…TSED), 479 to 504 (AAAR…DDVQ), 542 to 561 (KENA…APDL), 575 to 615 (KQQK…ERSR), 667 to 686 (VLSG…TPAP), 888 to 1060 (CEKP…DEEI), and 1075 to 1100 (VAEE…HDHK). Basic and acidic residues predominate over residues 418–428 (DKTQRAVRPDD). The span at 580 to 615 (HGGEENKEEILQMSRGEDTATARRRQRREEVLERSR) shows a compositional bias: basic and acidic residues. Over residues 667–676 (VLSGRSTRSL) the composition is skewed to low complexity. The span at 888–898 (CEKPKPKRDYG) shows a compositional bias: basic and acidic residues. 3 stretches are compositionally biased toward polar residues: residues 907-916 (ASANNPTSSI), 994-1013 (SYSS…TSFA), and 1029-1041 (FQNH…SSVY). The segment covering 1089–1100 (RKQEESKSHDHK) has biased composition (basic and acidic residues).

Belongs to the protein-tyrosine phosphatase family. Non-receptor class dual specificity subfamily. Expressed in muscle fibers in a regular striated pattern (at protein level).

The protein localises to the cytoplasm. The protein resides in the myofibril. It localises to the sarcomere. Functionally, required for myofiber maturation. In Danio rerio (Zebrafish), this protein is Serine/threonine/tyrosine-interacting-like protein 2 (styxl2).